The following is a 370-amino-acid chain: Peptide chain release factor 2 (370 aa).

N5-methylglutamine is present on Gln252.

It belongs to the prokaryotic/mitochondrial release factor family. Methylated by PrmC. Methylation increases the termination efficiency of RF2.

The protein localises to the cytoplasm. In terms of biological role, peptide chain release factor 2 directs the termination of translation in response to the peptide chain termination codons UGA and UAA. The chain is Peptide chain release factor 2 from Mycobacterium avium (strain 104).